The primary structure comprises 420 residues: G2/mitotic-specific cyclin-A (420 aa).

Residues 64-93 (VQGSRIQPTRAAKEKLKPPQNISDSQLVND) form a disordered region. The segment covering 83 to 93 (QNISDSQLVND) has biased composition (polar residues).

Belongs to the cyclin family. Cyclin AB subfamily.

In terms of biological role, essential for the control of the cell cycle at the G2/M (mitosis) transition. Interacts with the CDC2 and CDK2 protein kinases to form MPF. G2/M cyclins accumulate steadily during G2 and are abruptly destroyed at mitosis. The protein is G2/mitotic-specific cyclin-A of Hydra viridissima (Green hydra).